Here is a 687-residue protein sequence, read N- to C-terminus: Dictomallein (687 aa).

Disordered regions lie at residues 1–45 (MGNG…SRRL) and 73–112 (TAGGAAPLTPAVASPAGPTGSTPGSTPGATTAPAPSSTSA). Residues 233 to 501 (PVFGTDADVQ…QAWIASRVLA (269 aa)) enclose the Peptidase M66 domain. Residue histidine 393 coordinates Zn(2+). The active site involves glutamate 394. Histidine 397 and histidine 403 together coordinate Zn(2+).

It belongs to the dictomallein family. Zn(2+) is required as a cofactor.

The protein is Dictomallein (dtmL) of Burkholderia pseudomallei (strain 1710b).